Consider the following 83-residue polypeptide: Cytochrome b559 subunit alpha (83 aa).

Residues 21-35 (VIHSITIPSLFIAGW) traverse the membrane as a helical segment. Position 23 (His23) interacts with heme.

It belongs to the PsbE/PsbF family. As to quaternary structure, heterodimer of an alpha subunit and a beta subunit. PSII is composed of 1 copy each of membrane proteins PsbA, PsbB, PsbC, PsbD, PsbE, PsbF, PsbH, PsbI, PsbJ, PsbK, PsbL, PsbM, PsbT, PsbX, PsbY, PsbZ, Psb30/Ycf12, at least 3 peripheral proteins of the oxygen-evolving complex and a large number of cofactors. It forms dimeric complexes. Heme b is required as a cofactor.

The protein localises to the plastid. Its subcellular location is the chloroplast thylakoid membrane. Functionally, this b-type cytochrome is tightly associated with the reaction center of photosystem II (PSII). PSII is a light-driven water:plastoquinone oxidoreductase that uses light energy to abstract electrons from H(2)O, generating O(2) and a proton gradient subsequently used for ATP formation. It consists of a core antenna complex that captures photons, and an electron transfer chain that converts photonic excitation into a charge separation. This Chlorella vulgaris (Green alga) protein is Cytochrome b559 subunit alpha.